Here is a 498-residue protein sequence, read N- to C-terminus: UPF0371 protein cauri_2449 (498 aa).

This sequence belongs to the UPF0371 family.

The sequence is that of UPF0371 protein cauri_2449 from Corynebacterium aurimucosum (strain ATCC 700975 / DSM 44827 / CIP 107346 / CN-1) (Corynebacterium nigricans).